Reading from the N-terminus, the 624-residue chain is Phosphatidylinositol 4-kinase lsb6 (624 aa).

Residues 1 to 31 (MESTFHSDTLDSFPNYQENSLNTNEEQTNPL) show a composition bias toward polar residues. The disordered stretch occupies residues 1-53 (MESTFHSDTLDSFPNYQENSLNTNEEQTNPLESLRDGWASSNSSSSSSLLLPD). Positions 40-51 (SSNSSSSSSLLL) are enriched in low complexity. Residues 145–520 (GVFPVLISKG…LLELPNLYVV (376 aa)) form the PI3K/PI4K catalytic domain. Residues 151–157 (ISKGSSG) form a G-loop region. The interval 346 to 354 (RNTDRNLDN) is catalytic loop. Residues 409–429 (AIDNSLAFPYKHPDSWRSFPY) are activation loop.

It belongs to the PI3/PI4-kinase family. The cofactor is Mg(2+). It depends on Mn(2+) as a cofactor.

It is found in the cell membrane. The protein localises to the vacuole membrane. It localises to the golgi apparatus membrane. It catalyses the reaction a 1,2-diacyl-sn-glycero-3-phospho-(1D-myo-inositol) + ATP = a 1,2-diacyl-sn-glycero-3-phospho-(1D-myo-inositol 4-phosphate) + ADP + H(+). Functionally, may play a role in endocytic and/or exocytic pathways. The sequence is that of Phosphatidylinositol 4-kinase lsb6 (lsb6) from Schizosaccharomyces pombe (strain 972 / ATCC 24843) (Fission yeast).